The sequence spans 1391 residues: DNA-directed RNA polymerase subunit beta' (1391 aa).

Zn(2+) contacts are provided by C72, C74, C87, and C90. Mg(2+)-binding residues include D462, D464, and D466. Zn(2+) contacts are provided by C816, C890, C897, and C900.

The protein belongs to the RNA polymerase beta' chain family. In terms of assembly, the RNAP catalytic core consists of 2 alpha, 1 beta, 1 beta' and 1 omega subunit. When a sigma factor is associated with the core the holoenzyme is formed, which can initiate transcription. Mg(2+) serves as cofactor. It depends on Zn(2+) as a cofactor.

The enzyme catalyses RNA(n) + a ribonucleoside 5'-triphosphate = RNA(n+1) + diphosphate. DNA-dependent RNA polymerase catalyzes the transcription of DNA into RNA using the four ribonucleoside triphosphates as substrates. The chain is DNA-directed RNA polymerase subunit beta' from Neisseria gonorrhoeae (strain ATCC 700825 / FA 1090).